A 282-amino-acid polypeptide reads, in one-letter code: Aminoglycoside 6-adenylyltransferase (282 aa).

It catalyses the reaction streptomycin + ATP = 6-O-adenylylstreptomycin + diphosphate. In terms of biological role, required for streptomycin resistance. Adenylates streptomycin on the O-6 residue. This is Aminoglycoside 6-adenylyltransferase from Staphylococcus aureus.